A 549-amino-acid polypeptide reads, in one-letter code: MKNINPTQTAAWQALQKHFDEMKDVTIADLFAKDGDRFSKFSATFGDQMLVDYSKNRITEETLAKLQDLAKECDLAGAIKSMFSGEKINRTENRAVLHVALRNRSNTPILVDGKDVMPEVNAVLEKMKTFSEAIISGEWKGYTGKAITDVVNIGIGGSDLGPYMVTEALRPYKNHLNMHFVSNVDGTHIAEVLKKVNPETTLFLVASKTFTTQETMTNAHSARDWFLKAAGDEKHVAKHFAALSTNAKAVGEFGIDTANMFEFWDWVGGRYSLWSAIGLSIVLSIGFDNFVELLSGAHAMDKHFSTTPAEKNLPVLLALIGIWYNNFFGAETEAILPYDQYMHRFAAYFQQGNMESNGKYVDRNGNVVDYQTGPIIWGEPGTNGQHAFYQLIHQGTKMVPCDFIAPAITHNPLSDHHQKLLSNFFAQTEALAFGKSREVVEQEYRDQGKDPATLDYVVPFKVFEGNRPTNSILLREITPFSLGALIALYEHKIFTQGVILNIFTFDQWGVELGKQLANRILPELKDDKEISSHDSSTNGLINRYKAWRG.

N6-acetyllysine is present on residues Lys80, Lys228, and Lys234. Catalysis depends on Glu355, which acts as the Proton donor. Residues His386 and Lys514 contribute to the active site.

It belongs to the GPI family.

The protein resides in the cytoplasm. It carries out the reaction alpha-D-glucose 6-phosphate = beta-D-fructose 6-phosphate. It functions in the pathway carbohydrate biosynthesis; gluconeogenesis. Its pathway is carbohydrate degradation; glycolysis; D-glyceraldehyde 3-phosphate and glycerone phosphate from D-glucose: step 2/4. Its function is as follows. Catalyzes the reversible isomerization of glucose-6-phosphate to fructose-6-phosphate. In Escherichia coli O139:H28 (strain E24377A / ETEC), this protein is Glucose-6-phosphate isomerase.